An 816-amino-acid polypeptide reads, in one-letter code: Phenylalanine--tRNA ligase beta subunit (816 aa).

The 109-residue stretch at 40–148 folds into the tRNA-binding domain; that stretch reads FEELAALKTG…EGMAHGQRFI (109 aa). Residues 401 to 479 form the B5 domain; that stretch reads KAVEVQRFSI…RIYGYDNVPT (79 aa). The Mg(2+) site is built by D457, D463, E466, and E467. Residues 721 to 814 form the FDX-ACB domain; that stretch reads PVYPAVKRDI…LTDRFGGSFR (94 aa).

This sequence belongs to the phenylalanyl-tRNA synthetase beta subunit family. Type 1 subfamily. In terms of assembly, tetramer of two alpha and two beta subunits. The cofactor is Mg(2+).

It localises to the cytoplasm. It catalyses the reaction tRNA(Phe) + L-phenylalanine + ATP = L-phenylalanyl-tRNA(Phe) + AMP + diphosphate + H(+). The protein is Phenylalanine--tRNA ligase beta subunit of Desulfotalea psychrophila (strain LSv54 / DSM 12343).